Reading from the N-terminus, the 226-residue chain is uncharacterized protein (226 aa).

It belongs to the mimivirus L246/L426 family.

This is an uncharacterized protein from Acanthamoeba polyphaga mimivirus (APMV).